Reading from the N-terminus, the 245-residue chain is NAD(P)H-hydrate epimerase (245 aa).

Positions 16 to 224 constitute a YjeF N-terminal domain; that stretch reads AAALDAELMA…HIADKYDLEV (209 aa). Residue 68-72 participates in (6S)-NADPHX binding; sequence NNGGD. The K(+) site is built by Asn-69 and Asp-131. (6S)-NADPHX-binding positions include 135–141 and Asp-164; that span reads GFSFKPP. Residue Ser-167 participates in K(+) binding.

This sequence belongs to the NnrE/AIBP family. K(+) serves as cofactor.

Its subcellular location is the cytoplasm. The protein resides in the mitochondrion. The catalysed reaction is (6R)-NADHX = (6S)-NADHX. It catalyses the reaction (6R)-NADPHX = (6S)-NADPHX. In terms of biological role, catalyzes the epimerization of the S- and R-forms of NAD(P)HX, a damaged form of NAD(P)H that is a result of enzymatic or heat-dependent hydration. This is a prerequisite for the S-specific NAD(P)H-hydrate dehydratase to allow the repair of both epimers of NAD(P)HX. This is NAD(P)H-hydrate epimerase from Yarrowia lipolytica (strain CLIB 122 / E 150) (Yeast).